Here is a 213-residue protein sequence, read N- to C-terminus: tRNA (guanine-N(7)-)-methyltransferase (213 aa).

4 residues coordinate S-adenosyl-L-methionine: Glu-44, Glu-69, Asp-96, and Asp-118. Asp-118 is an active-site residue. Substrate-binding positions include Lys-122, Asp-154, and 192–195 (TEYE).

It belongs to the class I-like SAM-binding methyltransferase superfamily. TrmB family.

The catalysed reaction is guanosine(46) in tRNA + S-adenosyl-L-methionine = N(7)-methylguanosine(46) in tRNA + S-adenosyl-L-homocysteine. It functions in the pathway tRNA modification; N(7)-methylguanine-tRNA biosynthesis. Catalyzes the formation of N(7)-methylguanine at position 46 (m7G46) in tRNA. The protein is tRNA (guanine-N(7)-)-methyltransferase of Limosilactobacillus reuteri (strain DSM 20016) (Lactobacillus reuteri).